The chain runs to 184 residues: Sec-independent protein translocase protein TatB (184 aa).

The helical transmembrane segment at Met-1–Gly-21 threads the bilayer. Residues Ala-149–Gln-168 are compositionally biased toward acidic residues. A disordered region spans residues Ala-149–Val-184.

It belongs to the TatB family. As to quaternary structure, the Tat system comprises two distinct complexes: a TatABC complex, containing multiple copies of TatA, TatB and TatC subunits, and a separate TatA complex, containing only TatA subunits. Substrates initially bind to the TatABC complex, which probably triggers association of the separate TatA complex to form the active translocon.

Its subcellular location is the cell inner membrane. In terms of biological role, part of the twin-arginine translocation (Tat) system that transports large folded proteins containing a characteristic twin-arginine motif in their signal peptide across membranes. Together with TatC, TatB is part of a receptor directly interacting with Tat signal peptides. TatB may form an oligomeric binding site that transiently accommodates folded Tat precursor proteins before their translocation. This Histophilus somni (strain 129Pt) (Haemophilus somnus) protein is Sec-independent protein translocase protein TatB.